Consider the following 133-residue polypeptide: uncharacterized protein (133 aa).

The tract at residues 82 to 133 (KIKSYSPSRSQKALNNPSKIRTKQTNNDTTIQQSNNTTSTNTKPSSNTNTQQ) is disordered. Over residues 86–100 (YSPSRSQKALNNPSK) the composition is skewed to polar residues. The segment covering 105 to 133 (QTNNDTTIQQSNNTTSTNTKPSSNTNTQQ) has biased composition (low complexity).

This is an uncharacterized protein from Acidianus convivator (ABV).